Here is a 208-residue protein sequence, read N- to C-terminus: Imidazoleglycerol-phosphate dehydratase (208 aa).

This sequence belongs to the imidazoleglycerol-phosphate dehydratase family.

The protein resides in the cytoplasm. It catalyses the reaction D-erythro-1-(imidazol-4-yl)glycerol 3-phosphate = 3-(imidazol-4-yl)-2-oxopropyl phosphate + H2O. Its pathway is amino-acid biosynthesis; L-histidine biosynthesis; L-histidine from 5-phospho-alpha-D-ribose 1-diphosphate: step 6/9. The polypeptide is Imidazoleglycerol-phosphate dehydratase (Psychrobacter sp. (strain PRwf-1)).